Reading from the N-terminus, the 61-residue chain is Large ribosomal subunit protein uL30 (61 aa).

The protein belongs to the universal ribosomal protein uL30 family. As to quaternary structure, part of the 50S ribosomal subunit.

In Corynebacterium glutamicum (strain R), this protein is Large ribosomal subunit protein uL30.